We begin with the raw amino-acid sequence, 31 residues long: Cyclotide vibi-F (31 aa).

The cyclopeptide (Gly-Asn) cross-link spans G1–N31. 3 cysteine pairs are disulfide-bonded: C5-C21, C9-C23, and C14-C28.

This is a cyclic peptide.

Functionally, probably participates in a plant defense mechanism. This Viola biflora (Yellow wood violet) protein is Cyclotide vibi-F.